Here is a 148-residue protein sequence, read N- to C-terminus: MNKQVRQSKIREMLHLHEVGNQHDLIRLLEEAGIRVAQATLSRDCSELGIIRSKGLNGYRLALPEENPGNIIKGLVEVEVLSIQSNEAVIIIKTLPGRAHGVGSFLDQLKNSQILGTIAGDDTVLVIPVSVAQISQVISYIQENLSKN.

Belongs to the ArgR family.

It is found in the cytoplasm. It participates in amino-acid biosynthesis; L-arginine biosynthesis [regulation]. Regulates arginine biosynthesis genes. This is Arginine repressor from Chlorobium limicola (strain DSM 245 / NBRC 103803 / 6330).